The chain runs to 456 residues: MTVTVRFAPSPTGQIHIGNARTALFNWLFARRAGGSFVLRFDDTDVERSRREYADQIEIDLAWLGIKPDLTVRQSERFGLYNQAVEKLKEAGRLYPCYETAEELELRRKIRLSRRLPPIYGREALKLTEEQKAAYEAEGRKPHWRFLLPNFDSDPFSTGRTEIHWDDVIRGPQTVDLASMSDPVLVREDGTFLYTLPSVVDDIDLGITHVIRGDDHVTNTGAQIALFEALGAKAPCFGHHNLLTTVTGEGLSKRTGALSIASLRKAGIEPMAVASLAVLIGTSEAVTAYRDMEELAAHFEPASSSKSSAKFDPAELEALSRSLIQAMPFEAAAPRLAAMGVEGSIAEPFWNAVRGNIDKLSEAAEWWHIVMKGPEPTEFTEDDRNFVNEAFDLLPPEPWDRETWRSWTEKVKEKTGRKGKALFRPLRLALTGRESGPELADLLPLLGRERTLARQP.

Residues 9–19 (PSPTGQIHIGN) carry the 'HIGH' region motif. Residues 250–254 (GLSKR) carry the 'KMSKS' region motif. Residue K253 coordinates ATP.

The protein belongs to the class-I aminoacyl-tRNA synthetase family. Glutamate--tRNA ligase type 1 subfamily. Monomer.

Its subcellular location is the cytoplasm. The catalysed reaction is tRNA(Glu) + L-glutamate + ATP = L-glutamyl-tRNA(Glu) + AMP + diphosphate. Functionally, catalyzes the attachment of glutamate to tRNA(Glu) in a two-step reaction: glutamate is first activated by ATP to form Glu-AMP and then transferred to the acceptor end of tRNA(Glu). The protein is Glutamate--tRNA ligase 1 of Chelativorans sp. (strain BNC1).